A 344-amino-acid polypeptide reads, in one-letter code: RNA-binding protein squid (344 aa).

The interval 1-55 (MAENKQVDTEINGEDFTKDVTADGPGSENGDAGAAGSTNGSSDNQSAASGQRDDD) is disordered. Residues 36-49 (GSTNGSSDNQSAAS) show a composition bias toward polar residues. RRM domains lie at 56 to 138 (RKLF…HGKI) and 136 to 213 (GKIF…RATP). Ser148 is subject to Phosphoserine. Disordered stretches follow at residues 214 to 238 (KPEN…RGGY) and 301 to 344 (GGGG…HQPY). The segment at 215 to 254 (PENQMMGGMRGGPRGGMRGGRGGYGGRGGYNNQWDGQGSY) is M9-like motif. 2 stretches are compositionally biased toward gly residues: residues 222–238 (GMRG…RGGY) and 301–337 (GGGG…GGGR). The M9 motif stretch occupies residues 300–338 (GGGGGGNMGGGRGGPRGGGGPKGGGGFNGGKQRGGGGRQ).

Interacts with bru1/Bruno; the interaction is direct but weak, and may play a role in regulation of grk mRNA localization and translation. In terms of assembly, interacts (probably via M9 and M9-like motifs) with Tnpo/Transportin; the interaction is direct and is involved in nuclear localization. Interacts with fs(1)K10 (via N-terminus); may be involved in localization of sqd in the oocyte during oogenesis. As to quaternary structure, interacts (via C-terminus) with Hrb27C; the interaction is RNA dependent. Does not interact with Tnpo/Transportin. Interacts with fs(1)K10 (via N-terminus); may be involved in localization of sqd in the oocyte during oogenesis. Interacts (probably via M9-like motif) with Tnpo/Transportin; the interaction is direct and is involved in nuclear localization. Interacts with fs(1)K10 (via N-terminus); may be involved in localization of sqd in the oocyte during oogenesis.

The protein localises to the nucleus. Its subcellular location is the cytoplasm. Its function is as follows. Component of ribonucleosomes. Could be needed to organize a concentration gradient of a dorsalizing morphogen (Dm) originating in the germinal vesicle. At least one of the isoforms is essential in somatic tissues. Interacts with grk mRNA (via 3' UTR) and involved in its localization to the dorsal anterior region of the oocyte during dorsal-ventral axis determination; may function as a ribonuclear protein complex together with otu and Hrb27C. Required for polytene chromosome dispersal in nurse cells during oogenesis; nuclear isoforms play a greater role in this than cytoplasmic isoforms. Required nonredundantly with isoform A/sqdA for dorsoventral pattern determination during oogenesis. May be important in somatic tissues. Functionally, required nonredundantly with isoform B/SqdS for dorsoventral pattern determination during oogenesis. In terms of biological role, may lack a role in dorsoventral pattern determination during oogenesis. May be important in somatic tissues. In Drosophila melanogaster (Fruit fly), this protein is RNA-binding protein squid.